Here is a 293-residue protein sequence, read N- to C-terminus: Small ribosomal subunit biogenesis GTPase RsgA (293 aa).

Positions 63–223 (QNELVRPPVA…VADTPGFSAL (161 aa)) constitute a CP-type G domain. Residues 112–115 (SKID) and 166–174 (GQSGVGKSS) each bind GTP. Residues Cys247, Cys252, His254, and Cys260 each contribute to the Zn(2+) site.

This sequence belongs to the TRAFAC class YlqF/YawG GTPase family. RsgA subfamily. In terms of assembly, monomer. Associates with 30S ribosomal subunit, binds 16S rRNA. Zn(2+) serves as cofactor.

Its subcellular location is the cytoplasm. Functionally, one of several proteins that assist in the late maturation steps of the functional core of the 30S ribosomal subunit. Helps release RbfA from mature subunits. May play a role in the assembly of ribosomal proteins into the subunit. Circularly permuted GTPase that catalyzes slow GTP hydrolysis, GTPase activity is stimulated by the 30S ribosomal subunit. This chain is Small ribosomal subunit biogenesis GTPase RsgA, found in Geobacillus thermodenitrificans (strain NG80-2).